Here is a 368-residue protein sequence, read N- to C-terminus: DNA replication and repair protein RecF (368 aa).

Residue 30–37 (GNNAQGKT) participates in ATP binding.

Belongs to the RecF family.

Its subcellular location is the cytoplasm. In terms of biological role, the RecF protein is involved in DNA metabolism; it is required for DNA replication and normal SOS inducibility. RecF binds preferentially to single-stranded, linear DNA. It also seems to bind ATP. The sequence is that of DNA replication and repair protein RecF from Streptococcus pyogenes serotype M5 (strain Manfredo).